Consider the following 233-residue polypeptide: Ribonuclease 3 (233 aa).

Residues 4–126 (LNKLMERLGH…IVGAIYIDAG (123 aa)) form the RNase III domain. Glutamate 39 serves as a coordination point for Mg(2+). The active site involves aspartate 43. Mg(2+) contacts are provided by aspartate 112 and glutamate 115. Residue glutamate 115 is part of the active site. A DRBM domain is found at 153–222 (DAKSLLQEWL…AKRFLELLDD (70 aa)).

Belongs to the ribonuclease III family. Homodimer. It depends on Mg(2+) as a cofactor.

The protein localises to the cytoplasm. The catalysed reaction is Endonucleolytic cleavage to 5'-phosphomonoester.. Its function is as follows. Digests double-stranded RNA. Involved in the processing of primary rRNA transcript to yield the immediate precursors to the large and small rRNAs (23S and 16S). Processes some mRNAs, and tRNAs when they are encoded in the rRNA operon. Processes pre-crRNA and tracrRNA of type II CRISPR loci if present in the organism. The sequence is that of Ribonuclease 3 from Coxiella burnetii (strain CbuK_Q154) (Coxiella burnetii (strain Q154)).